The chain runs to 749 residues: Catalase-peroxidase 2 (749 aa).

An N-terminal signal peptide occupies residues Met1–Ala27. A cross-link (tryptophyl-tyrosyl-methioninium (Trp-Tyr) (with M-255)) is located at residues Trp107–Tyr229. The active-site Proton acceptor is His108. A cross-link (tryptophyl-tyrosyl-methioninium (Tyr-Met) (with W-107)) is located at residues Tyr229–Met255. Residue His270 coordinates heme b.

It belongs to the peroxidase family. Peroxidase/catalase subfamily. Homodimer or homotetramer. Requires heme b as cofactor. Post-translationally, formation of the three residue Trp-Tyr-Met cross-link is important for the catalase, but not the peroxidase activity of the enzyme.

It catalyses the reaction H2O2 + AH2 = A + 2 H2O. The enzyme catalyses 2 H2O2 = O2 + 2 H2O. In terms of biological role, bifunctional enzyme with both catalase and broad-spectrum peroxidase activity. This chain is Catalase-peroxidase 2, found in Legionella pneumophila (strain Paris).